A 264-amino-acid polypeptide reads, in one-letter code: MQIHSLKYPLIELKGVNVTFAQKTILSDINLTIYPNSIMTIVGPNGGGKSTLLKVLLKLLPATSGKVIYSKNVVIGYVPQNIYLDKSLPITVEKFLSLRKGTHKQDIKDALTLLSIGHLRLNAMQKLSGGEMQRVLLARAILNKPNLLVLDEPTQGVDITGQAELYQLIKQTQQQLNCAILMVSHDLHLVMADTNEVLCVNQHICCAGSPEAVSNDPVFIRFFGNQFAKNIAFYTHHHNHKHNIHGDICCGQDFRSTQCKHKIN.

The region spanning 11–226 (IELKGVNVTF…PVFIRFFGNQ (216 aa)) is the ABC transporter domain. 43 to 50 (GPNGGGKS) contacts ATP.

Belongs to the ABC transporter superfamily. Zinc importer (TC 3.A.1.15.5) family. As to quaternary structure, the complex is composed of two ATP-binding proteins (ZnuC), two transmembrane proteins (ZnuB) and a solute-binding protein (ZnuA).

It is found in the cell inner membrane. The catalysed reaction is Zn(2+)(out) + ATP(in) + H2O(in) = Zn(2+)(in) + ADP(in) + phosphate(in) + H(+)(in). Its function is as follows. Part of the ABC transporter complex ZnuABC involved in zinc import. Responsible for energy coupling to the transport system. The sequence is that of Zinc import ATP-binding protein ZnuC from Histophilus somni (strain 129Pt) (Haemophilus somnus).